Reading from the N-terminus, the 277-residue chain is Glycerol-3-phosphate acyltransferase (277 aa).

5 helical membrane passes run 3-23 (LFIFLILVGYLMGSINSAIIV), 55-75 (IMVMVFDALKGILPVILAKLL), 79-99 (PVTVAFTALAAVVGHMYPVFF), 111-131 (IGALLAFHFVIGVMVAATWLL), and 155-175 (LILVGNLNIFPPLFMITILVL). The tract at residues 207–277 (SPATSAEQEF…PKTKTVKEKE (71 aa)) is disordered. Residues 216 to 239 (FPGKEVIDTNIDETEKTEQAEAVK) are compositionally biased toward basic and acidic residues. Basic residues-rich tracts occupy residues 240 to 253 (KPKVKKATTKAKKT) and 262 to 271 (KPKSTKPKTK).

This sequence belongs to the PlsY family. In terms of assembly, probably interacts with PlsX.

Its subcellular location is the cell inner membrane. It catalyses the reaction an acyl phosphate + sn-glycerol 3-phosphate = a 1-acyl-sn-glycero-3-phosphate + phosphate. Its pathway is lipid metabolism; phospholipid metabolism. Its function is as follows. Catalyzes the transfer of an acyl group from acyl-phosphate (acyl-PO(4)) to glycerol-3-phosphate (G3P) to form lysophosphatidic acid (LPA). This enzyme utilizes acyl-phosphate as fatty acyl donor, but not acyl-CoA or acyl-ACP. In Legionella pneumophila (strain Corby), this protein is Glycerol-3-phosphate acyltransferase.